A 123-amino-acid chain; its full sequence is Galectin-2 (123 aa).

Positions 4–123 (KVEIMNMDMK…LRYLSVQGGF (120 aa)) constitute a Galectin domain. 65 to 71 (WGKEQRD) contacts a beta-D-galactoside.

As to quaternary structure, homodimer.

This protein binds beta-galactoside. Its physiological function is not yet known. This chain is Galectin-2 (LGALS2), found in Sus scrofa (Pig).